The sequence spans 305 residues: DNA-directed RNA polymerase 35 kDa subunit (305 aa).

Belongs to the poxviridae DNA-directed RNA polymerase 35 kDa subunit family. As to quaternary structure, the DNA-dependent RNA polymerase used for intermediate and late genes expression consists of eight subunits 147 kDa, 133 kDa, 35 kDa, 30 kDa, 22 kDa, 19 kDa, 18 kDa and 7 kDa totalling more than 500 kDa in mass. The same holoenzyme, with the addition of the transcription-specificity factor RAP94, is used for early gene expression.

It is found in the virion. The catalysed reaction is RNA(n) + a ribonucleoside 5'-triphosphate = RNA(n+1) + diphosphate. Functionally, part of the DNA-dependent RNA polymerase which catalyzes the transcription of viral DNA into RNA using the four ribonucleoside triphosphates as substrates. Responsible for the transcription of early, intermediate and late genes. DNA-dependent RNA polymerase associates with the early transcription factor (ETF) thereby allowing the early genes transcription. Late transcription, and probably also intermediate transcription, require newly synthesized RNA polymerase. The protein is DNA-directed RNA polymerase 35 kDa subunit (RPO35) of Rabbitpox virus (strain Utrecht) (RPV).